A 570-amino-acid polypeptide reads, in one-letter code: Glycine--tRNA ligase (570 aa).

Substrate contacts are provided by R99 and E165. Residues 197–199 (RNE), 207–212 (LRLREF), 324–325 (EC), and 443–446 (GIDR) each bind ATP. Residue 212-216 (FTQAE) participates in substrate binding. 439-443 (EPSFG) contacts substrate.

This sequence belongs to the class-II aminoacyl-tRNA synthetase family.

Its subcellular location is the cytoplasm. It carries out the reaction tRNA(Gly) + glycine + ATP = glycyl-tRNA(Gly) + AMP + diphosphate. Catalyzes the attachment of glycine to tRNA(Gly). This Thermococcus kodakarensis (strain ATCC BAA-918 / JCM 12380 / KOD1) (Pyrococcus kodakaraensis (strain KOD1)) protein is Glycine--tRNA ligase.